A 354-amino-acid polypeptide reads, in one-letter code: Selenide, water dikinase (354 aa).

Residue Cys23 is part of the active site. ATP-binding positions include Lys26 and 54 to 56 (TAD). Position 57 (Asp57) interacts with Mg(2+). Residues Asp74, Asp97, and 145 to 147 (GHS) contribute to the ATP site. Mg(2+) is bound at residue Asp97. Asp233 serves as a coordination point for Mg(2+).

Belongs to the selenophosphate synthase 1 family. Class I subfamily. As to quaternary structure, homodimer. Requires Mg(2+) as cofactor.

It carries out the reaction hydrogenselenide + ATP + H2O = selenophosphate + AMP + phosphate + 2 H(+). In terms of biological role, synthesizes selenophosphate from selenide and ATP. This Paraburkholderia xenovorans (strain LB400) protein is Selenide, water dikinase.